The primary structure comprises 307 residues: Elongation factor Ts (307 aa).

Positions 80-83 (TDFV) are involved in Mg(2+) ion dislocation from EF-Tu.

Belongs to the EF-Ts family.

It is found in the cytoplasm. Its function is as follows. Associates with the EF-Tu.GDP complex and induces the exchange of GDP to GTP. It remains bound to the aminoacyl-tRNA.EF-Tu.GTP complex up to the GTP hydrolysis stage on the ribosome. The protein is Elongation factor Ts of Variovorax paradoxus (strain S110).